Here is a 497-residue protein sequence, read N- to C-terminus: Proline--tRNA ligase (497 aa).

The protein belongs to the class-II aminoacyl-tRNA synthetase family. ProS type 3 subfamily. In terms of assembly, homodimer.

Its subcellular location is the cytoplasm. It catalyses the reaction tRNA(Pro) + L-proline + ATP = L-prolyl-tRNA(Pro) + AMP + diphosphate. In terms of biological role, catalyzes the attachment of proline to tRNA(Pro) in a two-step reaction: proline is first activated by ATP to form Pro-AMP and then transferred to the acceptor end of tRNA(Pro). The protein is Proline--tRNA ligase of Bacteroides fragilis (strain ATCC 25285 / DSM 2151 / CCUG 4856 / JCM 11019 / LMG 10263 / NCTC 9343 / Onslow / VPI 2553 / EN-2).